The sequence spans 819 residues: Pentatricopeptide repeat-containing protein At1g52620 (819 aa).

PPR repeat units lie at residues 98 to 132, 133 to 163, 169 to 203, 204 to 238, 239 to 273, 274 to 308, 309 to 343, 344 to 378, 379 to 413, 414 to 448, 449 to 483, 484 to 518, 519 to 553, 554 to 588, 589 to 623, 624 to 659, 709 to 743, and 744 to 779; these read NGFACSSFLKLLARYRIFNEIEDVLGNLRNENVKL, THEALSHVLHAYAESGSLSKAVEIYDYVVEL, DVIACNSLLSLLVKSRRLGDARKVYDEMCDRGDSV, DNYSTCILVKGMCNEGKVEVGRKLIEGRWGKGCIP, NIVFYNTIIGGYCKLGDIENAYLVFKELKLKGFMP, TLETFGTMINGFCKEGDFVASDRLLSEVKERGLRV, SVWFLNNIIDAKYRHGYKVDPAESIGWIIANDCKP, DVATYNILINRLCKEGKKEVAVGFLDEASKKGLIP, NNLSYAPLIQAYCKSKEYDIASKLLLQMAERGCKP, DIVTYGILIHGLVVSGHMDDAVNMKVKLIDRGVSP, DAAIYNMLMSGLCKTGRFLPAKLLFSEMLDRNILP, DAYVYATLIDGFIRSGDFDEARKVFSLSVEKGVKV, DVVHHNAMIKGFCRSGMLDEALACMNRMNEEHLVP, DKFTYSTIIDGYVKQQDMATAIKIFRYMEKNKCKP, NVVTYTSLINGFCCQGDFKMAEETFKEMQLRDLVP, NVVTYTTLIRSLAKESSTLEKAVYYWELMMTNKCVP, HAAAYNSALVCLCVHGMVKTACMFQDKMVKKGFSP, and DPVSFAAILHGFCVVGNSKQWRNMDFCNLGEKGLEV.

This sequence belongs to the PPR family. P subfamily.

This chain is Pentatricopeptide repeat-containing protein At1g52620, found in Arabidopsis thaliana (Mouse-ear cress).